Here is a 71-residue protein sequence, read N- to C-terminus: DNA-directed RNA polymerase subunit omega (71 aa).

It belongs to the RNA polymerase subunit omega family. As to quaternary structure, the RNAP catalytic core consists of 2 alpha, 1 beta, 1 beta' and 1 omega subunit. When a sigma factor is associated with the core the holoenzyme is formed, which can initiate transcription.

It catalyses the reaction RNA(n) + a ribonucleoside 5'-triphosphate = RNA(n+1) + diphosphate. Promotes RNA polymerase assembly. Latches the N- and C-terminal regions of the beta' subunit thereby facilitating its interaction with the beta and alpha subunits. In Syntrophomonas wolfei subsp. wolfei (strain DSM 2245B / Goettingen), this protein is DNA-directed RNA polymerase subunit omega.